The primary structure comprises 285 residues: Hydroxyethylthiazole kinase 1 (285 aa).

M48 contributes to the substrate binding site. ATP contacts are provided by R124 and S183. G210 serves as a coordination point for substrate.

Belongs to the Thz kinase family. It depends on Mg(2+) as a cofactor.

The enzyme catalyses 5-(2-hydroxyethyl)-4-methylthiazole + ATP = 4-methyl-5-(2-phosphooxyethyl)-thiazole + ADP + H(+). The protein operates within cofactor biosynthesis; thiamine diphosphate biosynthesis; 4-methyl-5-(2-phosphoethyl)-thiazole from 5-(2-hydroxyethyl)-4-methylthiazole: step 1/1. Catalyzes the phosphorylation of the hydroxyl group of 4-methyl-5-beta-hydroxyethylthiazole (THZ). The sequence is that of Hydroxyethylthiazole kinase 1 from Methanosphaera stadtmanae (strain ATCC 43021 / DSM 3091 / JCM 11832 / MCB-3).